A 367-amino-acid polypeptide reads, in one-letter code: 3-ketodihydrosphingosine reductase ksrA (367 aa).

Residues 12-32 (ASPATLGISLILCGFIVYSVS) form a helical membrane-spanning segment. NADPH-binding residues include Gly-53, Ser-55, Gly-57, Arg-78, Lys-82, Asp-108, and Leu-109. Positions 53 to 57 (GGSDG) match the GXSXG motif. A helical transmembrane segment spans residues 193–213 (LIFTCSTLAFVSIAGYAPYSP). Tyr-211 serves as the catalytic Proton acceptor. The NADP(+) site is built by Tyr-211, Lys-215, and Ile-259. The active-site Lowers pKa of active site Tyr is the Lys-215.

This sequence belongs to the short-chain dehydrogenases/reductases (SDR) family.

Its subcellular location is the endoplasmic reticulum membrane. The enzyme catalyses sphinganine + NADP(+) = 3-oxosphinganine + NADPH + H(+). It functions in the pathway lipid metabolism; sphingolipid metabolism. Catalyzes the reduction of 3'-oxosphinganine (3-ketodihydrosphingosine/KDS) to sphinganine (dihydrosphingosine/DHS), the second step of de novo sphingolipid biosynthesis. This Aspergillus fumigatus (strain ATCC MYA-4609 / CBS 101355 / FGSC A1100 / Af293) (Neosartorya fumigata) protein is 3-ketodihydrosphingosine reductase ksrA.